Consider the following 502-residue polypeptide: Protein YdgA (502 aa).

The N-terminal stretch at 1 to 19 (MNKSLVAVGVIVALGVVWT) is a signal peptide.

To E.coli YihF and H.influenzae HI_1236. As to quaternary structure, homodimer.

It is found in the cell inner membrane. The sequence is that of Protein YdgA (ydgA) from Escherichia coli (strain K12).